The following is a 145-amino-acid chain: D-aminoacyl-tRNA deacylase (145 aa).

The short motif at 137–138 (GP) is the Gly-cisPro motif, important for rejection of L-amino acids element.

This sequence belongs to the DTD family. In terms of assembly, homodimer.

The protein resides in the cytoplasm. It catalyses the reaction glycyl-tRNA(Ala) + H2O = tRNA(Ala) + glycine + H(+). The enzyme catalyses a D-aminoacyl-tRNA + H2O = a tRNA + a D-alpha-amino acid + H(+). Functionally, an aminoacyl-tRNA editing enzyme that deacylates mischarged D-aminoacyl-tRNAs. Also deacylates mischarged glycyl-tRNA(Ala), protecting cells against glycine mischarging by AlaRS. Acts via tRNA-based rather than protein-based catalysis; rejects L-amino acids rather than detecting D-amino acids in the active site. By recycling D-aminoacyl-tRNA to D-amino acids and free tRNA molecules, this enzyme counteracts the toxicity associated with the formation of D-aminoacyl-tRNA entities in vivo and helps enforce protein L-homochirality. The polypeptide is D-aminoacyl-tRNA deacylase (Citrobacter koseri (strain ATCC BAA-895 / CDC 4225-83 / SGSC4696)).